The following is a 220-amino-acid chain: Deoxyribose-phosphate aldolase 1 (220 aa).

Asp-89 acts as the Proton donor/acceptor in catalysis. Lys-151 acts as the Schiff-base intermediate with acetaldehyde in catalysis. Lys-180 (proton donor/acceptor) is an active-site residue.

Belongs to the DeoC/FbaB aldolase family. DeoC type 1 subfamily.

The protein localises to the cytoplasm. The enzyme catalyses 2-deoxy-D-ribose 5-phosphate = D-glyceraldehyde 3-phosphate + acetaldehyde. Its pathway is carbohydrate degradation; 2-deoxy-D-ribose 1-phosphate degradation; D-glyceraldehyde 3-phosphate and acetaldehyde from 2-deoxy-alpha-D-ribose 1-phosphate: step 2/2. Functionally, catalyzes a reversible aldol reaction between acetaldehyde and D-glyceraldehyde 3-phosphate to generate 2-deoxy-D-ribose 5-phosphate. This Staphylococcus aureus (strain bovine RF122 / ET3-1) protein is Deoxyribose-phosphate aldolase 1.